A 185-amino-acid chain; its full sequence is Peptidyl-tRNA hydrolase (185 aa).

Residue Y14 participates in tRNA binding. H19 functions as the Proton acceptor in the catalytic mechanism. Positions 64, 66, and 112 each coordinate tRNA.

It belongs to the PTH family. In terms of assembly, monomer.

Its subcellular location is the cytoplasm. The enzyme catalyses an N-acyl-L-alpha-aminoacyl-tRNA + H2O = an N-acyl-L-amino acid + a tRNA + H(+). Hydrolyzes ribosome-free peptidyl-tRNAs (with 1 or more amino acids incorporated), which drop off the ribosome during protein synthesis, or as a result of ribosome stalling. Its function is as follows. Catalyzes the release of premature peptidyl moieties from peptidyl-tRNA molecules trapped in stalled 50S ribosomal subunits, and thus maintains levels of free tRNAs and 50S ribosomes. In Alkaliphilus metalliredigens (strain QYMF), this protein is Peptidyl-tRNA hydrolase.